The following is a 144-amino-acid chain: Large ribosomal subunit protein uL16 (144 aa).

Belongs to the universal ribosomal protein uL16 family. Part of the 50S ribosomal subunit.

Binds 23S rRNA and is also seen to make contacts with the A and possibly P site tRNAs. The polypeptide is Large ribosomal subunit protein uL16 (Listeria innocua serovar 6a (strain ATCC BAA-680 / CLIP 11262)).